Consider the following 366-residue polypeptide: Alanine racemase (366 aa).

The Proton acceptor; specific for D-alanine role is filled by Lys-33. Lys-33 carries the N6-(pyridoxal phosphate)lysine modification. Position 129 (Arg-129) interacts with substrate. Tyr-253 (proton acceptor; specific for L-alanine) is an active-site residue. Met-301 lines the substrate pocket.

This sequence belongs to the alanine racemase family. Pyridoxal 5'-phosphate is required as a cofactor.

The enzyme catalyses L-alanine = D-alanine. Its pathway is amino-acid biosynthesis; D-alanine biosynthesis; D-alanine from L-alanine: step 1/1. In terms of biological role, catalyzes the interconversion of L-alanine and D-alanine. May also act on other amino acids. This is Alanine racemase (alr) from Xanthomonas oryzae pv. oryzae (strain MAFF 311018).